The primary structure comprises 272 residues: Undecaprenyl-diphosphatase (272 aa).

The next 7 membrane-spanning stretches (helical) occupy residues 6–26 (SLLI…LPVS), 45–65 (AKTF…VMFW), 92–112 (THIL…HDVI), 115–135 (LFYP…LLAA), 189–209 (YAAS…ATVL), 221–241 (ADVP…LIAI), and 251–271 (ISFI…YMVF).

It belongs to the UppP family.

It is found in the cell inner membrane. It carries out the reaction di-trans,octa-cis-undecaprenyl diphosphate + H2O = di-trans,octa-cis-undecaprenyl phosphate + phosphate + H(+). Its function is as follows. Catalyzes the dephosphorylation of undecaprenyl diphosphate (UPP). Confers resistance to bacitracin. The protein is Undecaprenyl-diphosphatase of Pectobacterium atrosepticum (strain SCRI 1043 / ATCC BAA-672) (Erwinia carotovora subsp. atroseptica).